The sequence spans 281 residues: Aldo-keto reductase MMAR_1744 (281 aa).

Catalysis depends on Tyr-56, which acts as the Proton donor. Residues Leu-196, Ile-234, Ser-237, Thr-245, Asn-246, and Arg-272 each contribute to the NADPH site.

Belongs to the aldo/keto reductase family.

The protein is Aldo-keto reductase MMAR_1744 of Mycobacterium marinum (strain ATCC BAA-535 / M).